The sequence spans 156 residues: Lipoprotein signal peptidase (156 aa).

3 consecutive transmembrane segments (helical) span residues 37–57, 68–88, and 95–115; these read VIPGFFNLVHVVNKGAAFGFL, FFVVVTIIALGAIGMLLKSAE, and ILGLGFVLGGAIGNLIDRILY. Residues Asp-120 and Asp-138 contribute to the active site. A helical transmembrane segment spans residues 133-153; the sequence is AFNVADIAICLGAFAMIVSFY.

Belongs to the peptidase A8 family.

It localises to the cell inner membrane. The catalysed reaction is Release of signal peptides from bacterial membrane prolipoproteins. Hydrolyzes -Xaa-Yaa-Zaa-|-(S,diacylglyceryl)Cys-, in which Xaa is hydrophobic (preferably Leu), and Yaa (Ala or Ser) and Zaa (Gly or Ala) have small, neutral side chains.. It participates in protein modification; lipoprotein biosynthesis (signal peptide cleavage). Functionally, this protein specifically catalyzes the removal of signal peptides from prolipoproteins. This is Lipoprotein signal peptidase from Maridesulfovibrio salexigens (strain ATCC 14822 / DSM 2638 / NCIMB 8403 / VKM B-1763) (Desulfovibrio salexigens).